We begin with the raw amino-acid sequence, 155 residues long: 6,7-dimethyl-8-ribityllumazine synthase (155 aa).

5-amino-6-(D-ribitylamino)uracil-binding positions include Phe23, 57-59 (AFE), and 81-83 (AVI). (2S)-2-hydroxy-3-oxobutyl phosphate is bound at residue 86-87 (ST). Residue His89 is the Proton donor of the active site. Phe114 contacts 5-amino-6-(D-ribitylamino)uracil. (2S)-2-hydroxy-3-oxobutyl phosphate is bound at residue Arg128.

It belongs to the DMRL synthase family.

The enzyme catalyses (2S)-2-hydroxy-3-oxobutyl phosphate + 5-amino-6-(D-ribitylamino)uracil = 6,7-dimethyl-8-(1-D-ribityl)lumazine + phosphate + 2 H2O + H(+). It participates in cofactor biosynthesis; riboflavin biosynthesis; riboflavin from 2-hydroxy-3-oxobutyl phosphate and 5-amino-6-(D-ribitylamino)uracil: step 1/2. Catalyzes the formation of 6,7-dimethyl-8-ribityllumazine by condensation of 5-amino-6-(D-ribitylamino)uracil with 3,4-dihydroxy-2-butanone 4-phosphate. This is the penultimate step in the biosynthesis of riboflavin. The protein is 6,7-dimethyl-8-ribityllumazine synthase of Desulfatibacillum aliphaticivorans.